A 968-amino-acid polypeptide reads, in one-letter code: RNA polymerase-associated protein RapA (968 aa).

Residues 164–334 (DVGRRHAPRV…FARLRLLDPN (171 aa)) enclose the Helicase ATP-binding domain. 177–184 (DEVGLGKT) contacts ATP. The DEAH box motif lies at 280-283 (DEAH). The Helicase C-terminal domain maps to 490-644 (RVEWLMGYLT…TCPTGRTVYD (155 aa)).

The protein belongs to the SNF2/RAD54 helicase family. RapA subfamily. In terms of assembly, interacts with the RNAP. Has a higher affinity for the core RNAP than for the holoenzyme. Its ATPase activity is stimulated by binding to RNAP.

Functionally, transcription regulator that activates transcription by stimulating RNA polymerase (RNAP) recycling in case of stress conditions such as supercoiled DNA or high salt concentrations. Probably acts by releasing the RNAP, when it is trapped or immobilized on tightly supercoiled DNA. Does not activate transcription on linear DNA. Probably not involved in DNA repair. The sequence is that of RNA polymerase-associated protein RapA from Klebsiella pneumoniae subsp. pneumoniae (strain ATCC 700721 / MGH 78578).